A 130-amino-acid chain; its full sequence is DNA-directed RNA polymerase subunit omega (130 aa).

2 disordered regions span residues 80–99 and 110–130; these read PEPDTVPLIGSAGASVDADD and EELLKGLEGLAPREEQPEEDE. Residues 110 to 124 show a composition bias toward basic and acidic residues; the sequence is EELLKGLEGLAPREE.

Belongs to the RNA polymerase subunit omega family. As to quaternary structure, the RNAP catalytic core consists of 2 alpha, 1 beta, 1 beta' and 1 omega subunit. When a sigma factor is associated with the core the holoenzyme is formed, which can initiate transcription.

It catalyses the reaction RNA(n) + a ribonucleoside 5'-triphosphate = RNA(n+1) + diphosphate. Promotes RNA polymerase assembly. Latches the N- and C-terminal regions of the beta' subunit thereby facilitating its interaction with the beta and alpha subunits. This Nitrobacter hamburgensis (strain DSM 10229 / NCIMB 13809 / X14) protein is DNA-directed RNA polymerase subunit omega.